The following is a 255-amino-acid chain: Eukaryotic translation initiation factor 3 subunit J (255 aa).

Acidic residues-rich tracts occupy residues 1-16 (MAENDSWDADDFEAED) and 34-53 (EGEDEEEDVKDNWDDEEEAQ). The disordered stretch occupies residues 1-107 (MAENDSWDAD…SSNLPEITPE (107 aa)). Residues 54–95 (DATKQEPQKTELKVPEKKKLQEKIKEKENLQKKRKEELKKQA) are compositionally biased toward basic and acidic residues. Residues 69–131 (EKKKLQEKIK…DSDLELAKEA (63 aa)) adopt a coiled-coil conformation.

It belongs to the eIF-3 subunit J family. As to quaternary structure, component of the eukaryotic translation initiation factor 3 (eIF-3) complex, which is composed of 13 subunits: eif3a, eif3b, eif3c, eif3d, eif3e, eif3f, eif3g, eif3h, eif3i, eif3j, eif3k, eif3l and eif3m.

It localises to the cytoplasm. In terms of biological role, component of the eukaryotic translation initiation factor 3 (eIF-3) complex, which is involved in protein synthesis of a specialized repertoire of mRNAs and, together with other initiation factors, stimulates binding of mRNA and methionyl-tRNAi to the 40S ribosome. The eIF-3 complex specifically targets and initiates translation of a subset of mRNAs involved in cell proliferation. This is Eukaryotic translation initiation factor 3 subunit J (eif3j) from Xenopus laevis (African clawed frog).